Here is a 475-residue protein sequence, read N- to C-terminus: Cytosolic non-specific dipeptidase (475 aa).

Ala2 bears the N-acetylalanine mark. Lys9 carries the post-translational modification N6-acetyllysine. The residue at position 58 (Ser58) is a Phosphoserine. Position 99 (His99) interacts with Mn(2+). Residue Asp101 is part of the active site. Mn(2+) is bound at residue Asp132. Residue Glu166 is the Proton acceptor of the active site. Residues 166–167, Asp195, and His228 each bind substrate; that span reads EE. Positions 167 and 195 each coordinate Mn(2+). Position 299 is a phosphoserine (Ser299). Substrate contacts are provided by Thr330, Arg343, Ser417, and His445. His445 provides a ligand contact to Mn(2+).

It belongs to the peptidase M20A family. Homodimer. It depends on Mn(2+) as a cofactor.

It localises to the cytoplasm. It catalyses the reaction Hydrolysis of dipeptides, preferentially hydrophobic dipeptides including prolyl amino acids.. The catalysed reaction is L-threonyl-L-threonine + H2O = 2 L-threonine. It carries out the reaction L-threonyl-L-serine + H2O = L-threonine + L-serine. The enzyme catalyses L-seryl-L-threonine + H2O = L-threonine + L-serine. It catalyses the reaction L-cysteinylglycine + H2O = L-cysteine + glycine. The catalysed reaction is (S)-lactate + L-phenylalanine = N-[(S)-lactoyl]-L-phenylalanine + H2O. Functionally, catalyzes the peptide bond hydrolysis in dipeptides, displaying a non-redundant activity toward threonyl dipeptides. Mediates threonyl dipeptide catabolism in a tissue-specific way. Has high dipeptidase activity toward cysteinylglycine, an intermediate metabolite in glutathione metabolism. Metabolizes N-lactoyl-amino acids, both through hydrolysis to form lactic acid and amino acids, as well as through their formation by reverse proteolysis. Plays a role in the regulation of cell cycle arrest and apoptosis. This Pongo abelii (Sumatran orangutan) protein is Cytosolic non-specific dipeptidase (CNDP2).